The primary structure comprises 55 residues: MAKATTIKIKLLSTADTGYFYVTTKNSRTMTEKMTKTKYDPVVKKHVEFKETKIK.

This sequence belongs to the bacterial ribosomal protein bL33 family.

The protein is Large ribosomal subunit protein bL33 of Sinorhizobium fredii (strain NBRC 101917 / NGR234).